The following is a 441-amino-acid chain: Protein FAM83A (441 aa).

2 disordered regions span residues 81 to 108 (SNDN…MNSD) and 312 to 368 (GMSI…SPLQ). A compositionally biased stretch (polar residues) spans 314-327 (SIMSDSNPESINTT). The span at 328–354 (SEPFSSISTASISNDSQRPKSPVSTTP) shows a compositional bias: low complexity.

Belongs to the FAM83 family.

The protein resides in the cytoplasm. Its function is as follows. May function in the epidermal growth factor receptor/EGFR signaling pathway. The chain is Protein FAM83A from Xenopus tropicalis (Western clawed frog).